The primary structure comprises 104 residues: Pyrimidine/purine nucleoside phosphorylase (104 aa).

It belongs to the nucleoside phosphorylase PpnP family.

It catalyses the reaction a purine D-ribonucleoside + phosphate = a purine nucleobase + alpha-D-ribose 1-phosphate. It carries out the reaction adenosine + phosphate = alpha-D-ribose 1-phosphate + adenine. The enzyme catalyses cytidine + phosphate = cytosine + alpha-D-ribose 1-phosphate. The catalysed reaction is guanosine + phosphate = alpha-D-ribose 1-phosphate + guanine. It catalyses the reaction inosine + phosphate = alpha-D-ribose 1-phosphate + hypoxanthine. It carries out the reaction thymidine + phosphate = 2-deoxy-alpha-D-ribose 1-phosphate + thymine. The enzyme catalyses uridine + phosphate = alpha-D-ribose 1-phosphate + uracil. The catalysed reaction is xanthosine + phosphate = alpha-D-ribose 1-phosphate + xanthine. In terms of biological role, catalyzes the phosphorolysis of diverse nucleosides, yielding D-ribose 1-phosphate and the respective free bases. Can use uridine, adenosine, guanosine, cytidine, thymidine, inosine and xanthosine as substrates. Also catalyzes the reverse reactions. This chain is Pyrimidine/purine nucleoside phosphorylase, found in Herminiimonas arsenicoxydans.